Here is a 241-residue protein sequence, read N- to C-terminus: 3-deoxy-D-manno-octulosonic acid kinase (241 aa).

D171 is an active-site residue.

Belongs to the protein kinase superfamily. KdkA/RfaP family.

The protein resides in the cell inner membrane. It catalyses the reaction an alpha-Kdo-(2-&gt;6)-lipid IVA + ATP = a 4-O-phospho-alpha-Kdo-(2-&gt;6)-lipid IVA + ADP + H(+). It participates in bacterial outer membrane biogenesis; LPS core biosynthesis. In terms of biological role, catalyzes the ATP-dependent phosphorylation of the 3-deoxy-D-manno-octulosonic acid (Kdo) residue in Kdo-lipid IV(A) at the 4-OH position. This is 3-deoxy-D-manno-octulosonic acid kinase from Haemophilus influenzae (strain 86-028NP).